Consider the following 37-residue polypeptide: Large ribosomal subunit protein bL36 (37 aa).

This sequence belongs to the bacterial ribosomal protein bL36 family.

This is Large ribosomal subunit protein bL36 from Azoarcus sp. (strain BH72).